The chain runs to 395 residues: Small ribosomal subunit protein mS31 (395 aa).

The transit peptide at 1–65 directs the protein to the mitochondrion; the sequence is MFPRVSTFLP…IQRYFGTNSV (65 aa). Disordered regions lie at residues 70–97 and 175–196; these read KDKQ…NTKK and SELL…DAKR. Over residues 183-196 the composition is skewed to basic and acidic residues; sequence QHEEESRAQRDAKR.

This sequence belongs to the mitochondrion-specific ribosomal protein mS31 family. Component of the mitochondrial small ribosomal subunit (mt-SSU). Mature mammalian 55S mitochondrial ribosomes consist of a small (28S) and a large (39S) subunit. The 28S small subunit contains a 12S ribosomal RNA (12S mt-rRNA) and 30 different proteins. The 39S large subunit contains a 16S rRNA (16S mt-rRNA), a copy of mitochondrial valine transfer RNA (mt-tRNA(Val)), which plays an integral structural role, and 52 different proteins.

The protein resides in the mitochondrion. The polypeptide is Small ribosomal subunit protein mS31 (MRPS31) (Homo sapiens (Human)).